The following is a 302-amino-acid chain: Coenzyme PQQ synthesis protein B (302 aa).

Belongs to the PqqB family.

Its pathway is cofactor biosynthesis; pyrroloquinoline quinone biosynthesis. May be involved in the transport of PQQ or its precursor to the periplasm. This Azotobacter vinelandii (strain DJ / ATCC BAA-1303) protein is Coenzyme PQQ synthesis protein B.